The following is a 733-amino-acid chain: Catalase-peroxidase (733 aa).

The tryptophyl-tyrosyl-methioninium (Trp-Tyr) (with M-245) cross-link spans 96–219 (WHSAGTYRTG…LAAVQMGLIY (124 aa)). The active-site Proton acceptor is H97. A cross-link (tryptophyl-tyrosyl-methioninium (Tyr-Met) (with W-96)) is located at residues 219 to 245 (YVNPEGPNGNPDPLAAAKDIRETFARM). H260 provides a ligand contact to heme b.

The protein belongs to the peroxidase family. Peroxidase/catalase subfamily. In terms of assembly, homodimer or homotetramer. The cofactor is heme b. In terms of processing, formation of the three residue Trp-Tyr-Met cross-link is important for the catalase, but not the peroxidase activity of the enzyme.

It carries out the reaction H2O2 + AH2 = A + 2 H2O. It catalyses the reaction 2 H2O2 = O2 + 2 H2O. Its function is as follows. Bifunctional enzyme with both catalase and broad-spectrum peroxidase activity. The chain is Catalase-peroxidase from Geobacter sp. (strain M21).